The sequence spans 180 residues: Small ribosomal subunit protein bS21c (180 aa).

A chloroplast-targeting transit peptide spans 1 to 79 (MASTSSLLNF…PSLAFSNTLY (79 aa)). The segment covering 14–45 (LFPSNTSLPPSSNPKFPNPNSLSSQQNSISIS) has biased composition (low complexity). 2 disordered regions span residues 14–49 (LFPS…SKKH) and 124–180 (NKQE…GAPF). Positions 130–147 (KRKHREAAKRNSRRRRGP) are enriched in basic residues. A compositionally biased stretch (basic and acidic residues) spans 154–166 (GKEEATKVDKKED).

As to quaternary structure, component of the chloroplast small ribosomal subunit (SSU). Mature 70S chloroplast ribosomes of higher plants consist of a small (30S) and a large (50S) subunit. The 30S small subunit contains 1 molecule of ribosomal RNA (16S rRNA) and 24 different proteins. The 50S large subunit contains 3 rRNA molecules (23S, 5S and 4.5S rRNA) and 33 different proteins. bS21c binds directly to 16S ribosomal RNA.

The protein resides in the plastid. It localises to the chloroplast. In terms of biological role, component of the chloroplast ribosome (chloro-ribosome), a dedicated translation machinery responsible for the synthesis of chloroplast genome-encoded proteins, including proteins of the transcription and translation machinery and components of the photosynthetic apparatus. The polypeptide is Small ribosomal subunit protein bS21c (rps21) (Spinacia oleracea (Spinach)).